The chain runs to 311 residues: MKVTVLGAAGGIGQALALLLKTQLPAGSELSLYDIAPVTPGVAVDLSHIPTSVKIAGFSGEDATPALKGADVVLISAGVARKPGMDRSDLFNVNAGIVRNLIEQVAATCPKALIGIITNPVNTTVAIAAEVLKKAGVYDKNRLFGITTLDIIRANAFVAELKGKQPEEVNVPVIGGHSGVTILPLLSQVPGVSFNEQETASLTKRIQNAGTEVVEAKAGGGSATLSMGQAAARFGLALVRALKGESNVIECAYVEGEGEYARFFSQPLLLGKNGIVERRPVGELSAFEQHALSSMLDTLKKDITQGEEFVK.

NAD(+) is bound by residues 7–13 and aspartate 34; that span reads GAAGGIG. Residues arginine 81 and arginine 87 each contribute to the substrate site. Residues asparagine 94 and 117–119 contribute to the NAD(+) site; that span reads ITN. 2 residues coordinate substrate: asparagine 119 and arginine 153. Histidine 177 functions as the Proton acceptor in the catalytic mechanism. Position 227 (methionine 227) interacts with NAD(+).

Belongs to the LDH/MDH superfamily. MDH type 1 family. As to quaternary structure, homodimer.

The catalysed reaction is (S)-malate + NAD(+) = oxaloacetate + NADH + H(+). Functionally, catalyzes the reversible oxidation of malate to oxaloacetate. The protein is Malate dehydrogenase of Erwinia tasmaniensis (strain DSM 17950 / CFBP 7177 / CIP 109463 / NCPPB 4357 / Et1/99).